The primary structure comprises 520 residues: GMP synthase [glutamine-hydrolyzing] (520 aa).

Positions Thr9–Asp202 constitute a Glutamine amidotransferase type-1 domain. Cys86 (nucleophile) is an active-site residue. Catalysis depends on residues His176 and Glu178. The region spanning Trp203–Arg395 is the GMPS ATP-PPase domain. Ser230–Ser236 is an ATP binding site.

In terms of assembly, homodimer.

The enzyme catalyses XMP + L-glutamine + ATP + H2O = GMP + L-glutamate + AMP + diphosphate + 2 H(+). The protein operates within purine metabolism; GMP biosynthesis; GMP from XMP (L-Gln route): step 1/1. Its function is as follows. Catalyzes the synthesis of GMP from XMP. The chain is GMP synthase [glutamine-hydrolyzing] from Rhizobium rhizogenes (strain K84 / ATCC BAA-868) (Agrobacterium radiobacter).